The chain runs to 378 residues: Ribosomal RNA large subunit methyltransferase G (378 aa).

The protein belongs to the methyltransferase superfamily. RlmG family.

It localises to the cytoplasm. It carries out the reaction guanosine(1835) in 23S rRNA + S-adenosyl-L-methionine = N(2)-methylguanosine(1835) in 23S rRNA + S-adenosyl-L-homocysteine + H(+). Specifically methylates the guanine in position 1835 (m2G1835) of 23S rRNA. This is Ribosomal RNA large subunit methyltransferase G from Shigella dysenteriae serotype 1 (strain Sd197).